The following is a 468-amino-acid chain: 3-isopropylmalate dehydratase large subunit (468 aa).

3 residues coordinate [4Fe-4S] cluster: C347, C407, and C410.

The protein belongs to the aconitase/IPM isomerase family. LeuC type 1 subfamily. Heterodimer of LeuC and LeuD. Requires [4Fe-4S] cluster as cofactor.

It catalyses the reaction (2R,3S)-3-isopropylmalate = (2S)-2-isopropylmalate. It functions in the pathway amino-acid biosynthesis; L-leucine biosynthesis; L-leucine from 3-methyl-2-oxobutanoate: step 2/4. Functionally, catalyzes the isomerization between 2-isopropylmalate and 3-isopropylmalate, via the formation of 2-isopropylmaleate. The sequence is that of 3-isopropylmalate dehydratase large subunit from Glaesserella parasuis serovar 5 (strain SH0165) (Haemophilus parasuis).